We begin with the raw amino-acid sequence, 222 residues long: uncharacterized protein (222 aa).

The region spanning 8–77 (AKKGQIIYRY…GNAGYFVAKN (70 aa)) is the HTH gntR-type domain.

This is an uncharacterized protein from Mycoplasma pneumoniae (strain ATCC 29342 / M129 / Subtype 1) (Mycoplasmoides pneumoniae).